Reading from the N-terminus, the 452-residue chain is Coiled-coil domain-containing protein 71 (452 aa).

The interval 81–106 (PSQTKLQARAPTPAATSPPASAPQTA) is disordered. Over residues 87–106 (QARAPTPAATSPPASAPQTA) the composition is skewed to low complexity. The residue at position 129 (S129) is a Phosphoserine. Disordered stretches follow at residues 209-256 (PLKV…GLQS) and 322-404 (AREV…LGPG). A coiled-coil region spans residues 279 to 344 (KAAQAKAACA…QAKAKVARTQ (66 aa)). Low complexity predominate over residues 332–344 (KAVQAKAKVARTQ). A compositionally biased stretch (basic and acidic residues) spans 377 to 386 (RTEEAKDLSP).

The polypeptide is Coiled-coil domain-containing protein 71 (CCDC71) (Bos taurus (Bovine)).